Reading from the N-terminus, the 497-residue chain is Protein adenylyltransferase Fic (497 aa).

A disordered region spans residues 1 to 30 (MGATDQALEAESKTTEPPKTPPVPEQHDRP). Residues 38 to 58 (LCHLLVLLFSGGLAAITLHIF) form a helical membrane-spanning segment. 2 TPR repeats span residues 123–156 (ALGALRLAQDMYLAGKDDKAARLFQHSLALAPRH) and 157–191 (PTVLLRYGEFLEHSQRNIVLADQYYFQALSISPSN). An Inhibitory (S/T)XXXE(G/N) motif motif is present at residues 248-253 (TVGIEG). ATP contacts are provided by residues Glu-252 and 333–336 (VGGH). The 136-residue stretch at 302–437 (ITIKDILELH…IRPFVRFIAD (136 aa)) folds into the Fido domain. Residue His-380 is part of the active site. ATP is bound by residues 384-391 (DGNGRTSR), 416-417 (YY), and Asn-424. The interval 468 to 497 (GEGVPQLQSSQMGGGASIPEFHESGSGSLP) is disordered.

The protein belongs to the fic family. Homodimer.

The protein localises to the membrane. The enzyme catalyses L-tyrosyl-[protein] + ATP = O-(5'-adenylyl)-L-tyrosyl-[protein] + diphosphate. It catalyses the reaction L-threonyl-[protein] + ATP = 3-O-(5'-adenylyl)-L-threonyl-[protein] + diphosphate. The catalysed reaction is 3-O-(5'-adenylyl)-L-threonyl-[protein] + H2O = L-threonyl-[protein] + AMP + H(+). Its activity is regulated as follows. The side chain of Glu-252 determines which of the two opposing activities (AMPylase or de-AMPylase) will take place. In response to endoplasmic reticulum stress, mediates de-AMPylase activity. Adenylyltransferase activity is inhibited by the inhibitory helix present at the N-terminus: Glu-252 binds ATP and competes with ATP-binding at Arg-391, thereby preventing adenylyltransferase activity. In unstressed cells, disengagement of Glu-252 promotes adenylyltransferase activity. Activation dissociates ATP-binding from Glu-252, allowing ordered binding of the entire ATP moiety with the alpha-phosphate in an orientation that is productive for accepting an incoming target hydroxyl side chain. Functionally, protein that can both mediate the addition of adenosine 5'-monophosphate (AMP) to specific residues of target proteins (AMPylation), and the removal of the same modification from target proteins (de-AMPylation), depending on the context. The side chain of Glu-252 determines which of the two opposing activities (AMPylase or de-AMPylase) will take place. Acts as a key regulator of the unfolded protein response (UPR) by mediating AMPylation or de-AMPylation of Hsc70-3/BiP. In unstressed cells, acts as an adenylyltransferase by mediating AMPylation of Hsc70-3/BiP at 'Thr-518', thereby inactivating it. In response to endoplasmic reticulum stress, acts as a phosphodiesterase by mediating removal of ATP (de-AMPylation) from Hsc70-3/BiP at 'Thr-518', leading to restore HSPA5/BiP activity. The protein is Protein adenylyltransferase Fic of Drosophila ananassae (Fruit fly).